The primary structure comprises 248 residues: tRNA (guanine-N(1)-)-methyltransferase (248 aa).

Residues Gly113 and 133-138 (IGDFVL) contribute to the S-adenosyl-L-methionine site.

This sequence belongs to the RNA methyltransferase TrmD family. In terms of assembly, homodimer.

It is found in the cytoplasm. The enzyme catalyses guanosine(37) in tRNA + S-adenosyl-L-methionine = N(1)-methylguanosine(37) in tRNA + S-adenosyl-L-homocysteine + H(+). In terms of biological role, specifically methylates guanosine-37 in various tRNAs. The protein is tRNA (guanine-N(1)-)-methyltransferase of Dehalococcoides mccartyi (strain ATCC BAA-2266 / KCTC 15142 / 195) (Dehalococcoides ethenogenes (strain 195)).